The primary structure comprises 306 residues: Beta-lactamase (306 aa).

A signal peptide (tat-type signal) is located at residues 1–34; it reads MDRTTARPNRRAVLATGVGAALAATAAAAGPAHA. S82 (acyl-ester intermediate) is an active-site residue. 250-252 contacts substrate; sequence KTG.

Belongs to the class-A beta-lactamase family. Post-translationally, predicted to be exported by the Tat system. The position of the signal peptide cleavage has not been experimentally proven.

It carries out the reaction a beta-lactam + H2O = a substituted beta-amino acid. The chain is Beta-lactamase (blaF) from Streptomyces fradiae (Streptomyces roseoflavus).